We begin with the raw amino-acid sequence, 218 residues long: Ribosomal RNA small subunit methyltransferase G (218 aa).

S-adenosyl-L-methionine is bound by residues Gly82, Leu87, 137-138 (VE), and Arg152.

Belongs to the methyltransferase superfamily. RNA methyltransferase RsmG family.

It is found in the cytoplasm. It carries out the reaction guanosine(527) in 16S rRNA + S-adenosyl-L-methionine = N(7)-methylguanosine(527) in 16S rRNA + S-adenosyl-L-homocysteine. Specifically methylates the N7 position of guanine in position 527 of 16S rRNA. The sequence is that of Ribosomal RNA small subunit methyltransferase G from Herminiimonas arsenicoxydans.